The chain runs to 1055 residues: Bifunctional fucokinase/GDP-fucose pyrophosphorylase (1055 aa).

The tract at residues 34 to 565 (WDAIVLTAAS…SSQRVSLEEL (532 aa)) is GDP-fucose pyrophosphorylase. Residues 693–1055 (GKSHSENHIS…VKVYNWSICI (363 aa)) are L-fucokinase. 826-836 (PRGSGLGTSSI) serves as a coordination point for ATP.

The protein belongs to the GHMP kinase family. Mn(2+) serves as cofactor. The cofactor is Mg(2+). As to expression, ubiquitous. Highest expression in flower buds.

The catalysed reaction is L-fucose + ATP = beta-L-fucose 1-phosphate + ADP + H(+). The enzyme catalyses beta-L-fucose 1-phosphate + GTP + H(+) = GDP-beta-L-fucose + diphosphate. Bifunctional enzyme involved in the salvage pathway which converts free L-fucose to GDP-L-fucose. Catalyzes two successive reactions, the ATP-dependent phosphorylation of L-fucose to L-fucose 1-phosphate, and its guanylylation to GDP-L-fucose. The sugar-1-kinase activity has a strict substrate specificity for L-fucose and ATP. The pyrophosphorylase activity has a strict substrate specificity for L-fucose 1-phosphate and GTP. This Arabidopsis thaliana (Mouse-ear cress) protein is Bifunctional fucokinase/GDP-fucose pyrophosphorylase (FKGP).